The primary structure comprises 275 residues: NAD(P)H-hydrate epimerase (275 aa).

In terms of domain architecture, YjeF N-terminal spans 49 to 258 (AIKIDQELFS…ALAAKYELNL (210 aa)). 102 to 106 (NNGGD) provides a ligand contact to (6S)-NADPHX. Residues asparagine 103 and aspartate 167 each coordinate K(+). (6S)-NADPHX-binding positions include 171–177 (GFSFKPP) and aspartate 200. Position 203 (serine 203) interacts with K(+).

The protein belongs to the NnrE/AIBP family. It depends on K(+) as a cofactor.

The enzyme catalyses (6R)-NADHX = (6S)-NADHX. It carries out the reaction (6R)-NADPHX = (6S)-NADPHX. Its function is as follows. Catalyzes the epimerization of the S- and R-forms of NAD(P)HX, a damaged form of NAD(P)H that is a result of enzymatic or heat-dependent hydration. This is a prerequisite for the S-specific NAD(P)H-hydrate dehydratase to allow the repair of both epimers of NAD(P)HX. This Ixodes scapularis (Black-legged tick) protein is NAD(P)H-hydrate epimerase.